The primary structure comprises 363 residues: Ribosomal RNA large subunit methyltransferase M (363 aa).

S-adenosyl-L-methionine contacts are provided by residues serine 194, 227–230 (CPGG), aspartate 246, aspartate 266, and aspartate 284. Lysine 313 functions as the Proton acceptor in the catalytic mechanism.

The protein belongs to the class I-like SAM-binding methyltransferase superfamily. RNA methyltransferase RlmE family. RlmM subfamily. Monomer.

It localises to the cytoplasm. It carries out the reaction cytidine(2498) in 23S rRNA + S-adenosyl-L-methionine = 2'-O-methylcytidine(2498) in 23S rRNA + S-adenosyl-L-homocysteine + H(+). In terms of biological role, catalyzes the 2'-O-methylation at nucleotide C2498 in 23S rRNA. The sequence is that of Ribosomal RNA large subunit methyltransferase M from Haemophilus influenzae (strain 86-028NP).